A 960-amino-acid chain; its full sequence is Importin alpha re-exporter (960 aa).

HEAT repeat units follow at residues M1–Q33, D34–N73, G74–R120, W121–L157, F158–D220, I221–E278, D279–P323, K324–N392, E393–S445, T446–L489, T490–E528, S529–D586, S587–T630, Q631–T674, I675–F716, P717–D751, M752–G794, and S795–G826. The 74-residue stretch at S23–S96 folds into the Importin N-terminal domain. Residues R366 to C381 carry the Nuclear localization signal motif. The HEAT 19; with insert repeat unit spans residues N827–K928. An HEAT 20 repeat occupies Y929 to N960.

This sequence belongs to the XPO2/CSE1 family. Binds with high affinity to SRP1 only in the presence of RanGTP. The complex is dissociated by the RanGTP-binding protein YRB1.

It is found in the cytoplasm. The protein localises to the nucleus. Export receptor for importin alpha (SRP1). Mediates importin-alpha re-export from the nucleus to the cytoplasm after import substrates have been released into the nucleoplasm. This Saccharomyces cerevisiae (strain ATCC 204508 / S288c) (Baker's yeast) protein is Importin alpha re-exporter (CSE1).